Here is a 645-residue protein sequence, read N- to C-terminus: DNA mismatch repair protein MutL (645 aa).

A disordered region spans residues 371 to 403 (VHDQKDKNHDVESHKNNLDSTSSTNNESTEVSN). Over residues 372–387 (HDQKDKNHDVESHKNN) the composition is skewed to basic and acidic residues. Positions 390 to 402 (STSSTNNESTEVS) are enriched in low complexity.

It belongs to the DNA mismatch repair MutL/HexB family.

In terms of biological role, this protein is involved in the repair of mismatches in DNA. It is required for dam-dependent methyl-directed DNA mismatch repair. May act as a 'molecular matchmaker', a protein that promotes the formation of a stable complex between two or more DNA-binding proteins in an ATP-dependent manner without itself being part of a final effector complex. The chain is DNA mismatch repair protein MutL from Staphylococcus epidermidis (strain ATCC 35984 / DSM 28319 / BCRC 17069 / CCUG 31568 / BM 3577 / RP62A).